We begin with the raw amino-acid sequence, 119 residues long: Dolichyl-diphosphooligosaccharide--protein glycosyltransferase subunit DAD1 (119 aa).

Ser2 is subject to N-acetylserine. At 2–30 (SASVASVISRFLEEYLSSTPQRLKLLDAY) the chain is on the cytoplasmic side. The helical transmembrane segment at 31–51 (LLYILLTGALQFGYCLLVGTF) threads the bilayer. The Lumenal segment spans residues 52 to 54 (PFN). The chain crosses the membrane as a helical span at residues 55–75 (SFLSGFISCVGSFILAGNGSL). At 76–81 (RNRSNN) the chain is on the cytoplasmic side. Residues 82 to 98 (VFTLVRCFSSLVTLFYS) form a helical membrane-spanning segment. The Lumenal portion of the chain corresponds to 99 to 119 (RSPPREVPRGACIALFCERGN).

It belongs to the DAD/OST2 family. As to quaternary structure, component of the oligosaccharyltransferase (OST) complex. OST exists in two different complex forms which contain common core subunits RPN1, RPN2, OST48, OST4, DAD1 and TMEM258, either STT3A or STT3B as catalytic subunits, and form-specific accessory subunits. STT3A complex assembly occurs through the formation of 3 subcomplexes. Subcomplex 1 contains RPN1 and TMEM258, subcomplex 2 contains the STT3A-specific subunits STT3A, DC2/OSTC, and KCP2 as well as the core subunit OST4, and subcomplex 3 contains RPN2, DAD1, and OST48. The STT3A complex can form stable complexes with the Sec61 complex or with both the Sec61 and TRAP complexes.

The protein resides in the endoplasmic reticulum membrane. It participates in protein modification; protein glycosylation. Subunit of the oligosaccharyl transferase (OST) complex that catalyzes the initial transfer of a defined glycan (Glc(3)Man(9)GlcNAc(2) in eukaryotes) from the lipid carrier dolichol-pyrophosphate to an asparagine residue within an Asn-X-Ser/Thr consensus motif in nascent polypeptide chains, the first step in protein N-glycosylation. N-glycosylation occurs cotranslationally and the complex associates with the Sec61 complex at the channel-forming translocon complex that mediates protein translocation across the endoplasmic reticulum (ER). All subunits are required for a maximal enzyme activity. The sequence is that of Dolichyl-diphosphooligosaccharide--protein glycosyltransferase subunit DAD1 from Canis lupus familiaris (Dog).